A 138-amino-acid polypeptide reads, in one-letter code: Nucleoside diphosphate kinase (138 aa).

ATP contacts are provided by lysine 12, tyrosine 60, arginine 88, threonine 94, arginine 105, and asparagine 115. Histidine 118 acts as the Pros-phosphohistidine intermediate in catalysis.

Belongs to the NDK family. In terms of assembly, homotetramer. Mg(2+) serves as cofactor.

The protein resides in the cytoplasm. It catalyses the reaction a 2'-deoxyribonucleoside 5'-diphosphate + ATP = a 2'-deoxyribonucleoside 5'-triphosphate + ADP. The catalysed reaction is a ribonucleoside 5'-diphosphate + ATP = a ribonucleoside 5'-triphosphate + ADP. In terms of biological role, major role in the synthesis of nucleoside triphosphates other than ATP. The ATP gamma phosphate is transferred to the NDP beta phosphate via a ping-pong mechanism, using a phosphorylated active-site intermediate. In Cutibacterium acnes (strain DSM 16379 / KPA171202) (Propionibacterium acnes), this protein is Nucleoside diphosphate kinase.